We begin with the raw amino-acid sequence, 536 residues long: Signal peptide peptidase-like 5 (536 aa).

An N-terminal signal peptide occupies residues 1 to 29 (MSLPPFTCRLLAAAAALYLIGLLCVGADT). At 30 to 186 (KDVTAPKIPG…VELLLYAPKS (157 aa)) the chain is on the lumenal side. One can recognise a PA domain in the interval 94–170 (SNLTSKLSWS…TSSGDALKKS (77 aa)). 2 N-linked (GlcNAc...) asparagine glycosylation sites follow: N95 and N151. Residues 187-207 (PIVDYAVVFLWLMSVGTVFVA) form a helical membrane-spanning segment. The Cytoplasmic portion of the chain corresponds to 208 to 243 (SVWSHVTSPKKNDEQYDELSPKKSSNVDATKGGAEE). Residues 218–238 (KNDEQYDELSPKKSSNVDATK) form a disordered region. Residues 244-264 (ETLDISAMGAVIFVISASTFL) form a helical membrane-spanning segment. The Lumenal segment spans residues 265-273 (VLLFFFMSS). The helical transmembrane segment at 274 to 296 (WFILILTIFFVIGGMQGMHNINV) threads the bilayer. Topologically, residues 297–318 (TLITRRCSKCGQKNLKLPLLGN) are cytoplasmic. The helical transmembrane segment at 319-339 (TSILSLVVLLFCFVVAILWFM) threads the bilayer. Topologically, residues 340–344 (NRKTS) are lumenal. A helical membrane pass occupies residues 345–365 (HAWAGQDIFGICMMINVLQVA). The Cytoplasmic portion of the chain corresponds to 366–374 (RLPNIRVAT). Residues 375–395 (ILLCCAFFYDIFWVFISPLIF) form a helical membrane-spanning segment. D384 is a catalytic residue. The Lumenal segment spans residues 396 to 428 (KQSVMIAVARGSKDTGESIPMLLRIPRLSDPWG). A helical membrane pass occupies residues 429–449 (GYNMIGFGDILFPGLLICFIF). The active site involves D437. At 450–463 (RFDKENNKGVSNGY) the chain is on the cytoplasmic side. A helical transmembrane segment spans residues 464–484 (FPWLMFGYGLGLFLTYLGLYV). Over 485–489 (MNGHG) the chain is Lumenal. Residues 490–510 (QPALLYLVPCTLGITVILGLV) form a helical membrane-spanning segment. Positions 491-493 (PAL) match the PAL motif. Residues 511–536 (RKELRDLWNYGTQQPSAADVNPSPEA) are Cytoplasmic-facing.

This sequence belongs to the peptidase A22B family. In terms of processing, glycosylated.

It localises to the endosome membrane. Its function is as follows. Intramembrane-cleaving aspartic protease (I-CLiP) that cleaves type II membrane signal peptides in the hydrophobic plane of the membrane. The protein is Signal peptide peptidase-like 5 (SPPL5) of Arabidopsis thaliana (Mouse-ear cress).